A 530-amino-acid polypeptide reads, in one-letter code: Ubiquitin carboxyl-terminal hydrolase 17-like protein 19 (530 aa).

The USP domain maps to 80–375; it reads AGLQNMGNTC…QAYVLFYIQK (296 aa). Cys-89 (nucleophile) is an active-site residue. The active-site Proton acceptor is the His-334. Basic and acidic residues-rich tracts occupy residues 382 to 392 and 398 to 413; these read SESVSRGREPR and DTDR…RDHP. Disordered regions lie at residues 382–413 and 476–530; these read SESV…RDHP and KNHH…LVCQ. A compositionally biased stretch (low complexity) spans 484 to 495; the sequence is SSLLKLSSTTPT. Polar residues predominate over residues 496–505; it reads HQESMNTGTL. Positions 510 to 524 are enriched in basic residues; that stretch reads GRARRSKGKNKHSKR.

The protein belongs to the peptidase C19 family. USP17 subfamily.

It localises to the nucleus. The protein resides in the endoplasmic reticulum. It catalyses the reaction Thiol-dependent hydrolysis of ester, thioester, amide, peptide and isopeptide bonds formed by the C-terminal Gly of ubiquitin (a 76-residue protein attached to proteins as an intracellular targeting signal).. Its function is as follows. Deubiquitinating enzyme that removes conjugated ubiquitin from specific proteins to regulate different cellular processes that may include cell proliferation, progression through the cell cycle, apoptosis, cell migration, and the cellular response to viral infection. The polypeptide is Ubiquitin carboxyl-terminal hydrolase 17-like protein 19 (USP17L19) (Homo sapiens (Human)).